The following is a 706-amino-acid chain: Lethal(3)malignant brain tumor-like protein 2 (706 aa).

Positions 1-85 are disordered; that stretch reads MEKPRGVEET…GTPRSLDGSG (85 aa). Ser-13 carries the post-translational modification Phosphoserine. Acidic residues predominate over residues 15 to 26; sequence PMEEEEEDDDLE. Residues 39–50 are compositionally biased toward low complexity; that stretch reads SSAGSESSSYLE. Residues 54-63 show a composition bias toward basic and acidic residues; the sequence is EAEHEDREAG. A Phosphoserine modification is found at Ser-68. Thr-77 carries the phosphothreonine modification. The segment at 82–117 adopts an FCS-type zinc-finger fold; that stretch reads DGSGSEPAVCEMCGIVGTREAFFSKTKRFCSVSCSR. Residues Cys-91, Cys-94, Cys-111, and Cys-115 each contribute to the Zn(2+) site. 4 MBT repeats span residues 180–284, 292–392, 398–501, and 509–605; these read FDWG…LVPP, TDWK…IKLS, MAHH…LTPP, and FSWE…LQPP. Ser-339 is modified (phosphoserine). A Glycyl lysine isopeptide (Lys-Gly) (interchain with G-Cter in SUMO2) cross-link involves residue Lys-406. The interval 606-669 is disordered; sequence VATEPTTPLK…KAPSEPAPDE (64 aa). Residues 620-635 show a composition bias toward basic residues; it reads TKKKKKQFGKKRKRIP. Residues Lys-648, Lys-660, and Lys-676 each participate in a glycyl lysine isopeptide (Lys-Gly) (interchain with G-Cter in SUMO2) cross-link. The segment at 685-706 is disordered; the sequence is ADKALSPELPVPVENIKQETDD. The residue at position 690 (Ser-690) is a Phosphoserine. Residue Lys-701 forms a Glycyl lysine isopeptide (Lys-Gly) (interchain with G-Cter in SUMO1); alternate linkage. Lys-701 is covalently cross-linked (Glycyl lysine isopeptide (Lys-Gly) (interchain with G-Cter in SUMO2); alternate).

Part of the E2F6.com-1 complex in G0 phase composed of E2F6, MGA, MAX, TFDP1, CBX3, BAT8, EUHMTASE1, RING1, RNF2, MBLR, BAT8 and YAF2.

The protein localises to the nucleus. Its function is as follows. Putative Polycomb group (PcG) protein. PcG proteins maintain the transcriptionally repressive state of genes, probably via a modification of chromatin, rendering it heritably changed in its expressibility. Its association with a chromatin-remodeling complex suggests that it may contribute to prevent expression of genes that trigger the cell into mitosis. Binds to monomethylated and dimethylated 'Lys-20' on histone H4. Binds histone H3 peptides that are monomethylated or dimethylated on 'Lys-4', 'Lys-9' or 'Lys-27'. The chain is Lethal(3)malignant brain tumor-like protein 2 (L3MBTL2) from Bos taurus (Bovine).